Here is a 234-residue protein sequence, read N- to C-terminus: Acetylxylan esterase 2 (234 aa).

Positions Met1–Ala17 are cleaved as a signal peptide. Positions Ile18–Arg27 are excised as a propeptide. Intrachain disulfides connect Cys29/Cys106 and Cys73/Cys79. The active site involves Ser117. Intrachain disulfides connect Cys128–Cys188, Cys174–Cys206, and Cys198–Cys205. The active site involves Asp202. N-linked (GlcNAc...) asparagine glycosylation is present at Asn207. His214 is a catalytic residue.

It belongs to the cutinase family. Acetylxylan esterase subfamily. In terms of assembly, monomer.

It localises to the secreted. The catalysed reaction is Deacetylation of xylans and xylo-oligosaccharides.. It participates in glycan degradation; xylan degradation. Functionally, degrades acetylated xylans by cleaving acetyl side groups from the hetero-xylan backbone. This is Acetylxylan esterase 2 (axe-2) from Talaromyces purpureogenus (Soft rot fungus).